We begin with the raw amino-acid sequence, 254 residues long: Pyruvate aldolase (254 aa).

His48 (proton acceptor) is an active-site residue. Glu151 and Asp177 together coordinate a divalent metal cation.

Belongs to the HpcH/HpaI aldolase family. Requires a divalent metal cation as cofactor.

It catalyses the reaction D-glyceraldehyde + pyruvate = 2-dehydro-3-deoxy-L-galactonate. Functionally, aldolase which can catalyze in vitro the aldolisation reaction between pyruvate (PA) and D-glyceraldehyde (D-GA) to form 2-dehydro-3-deoxy-L-galactonate. This Rhizobium etli (strain ATCC 51251 / DSM 11541 / JCM 21823 / NBRC 15573 / CFN 42) protein is Pyruvate aldolase.